The chain runs to 311 residues: Probable manganese-dependent inorganic pyrophosphatase (311 aa).

Mn(2+) contacts are provided by histidine 9, aspartate 13, aspartate 15, aspartate 77, histidine 99, and aspartate 151.

It belongs to the PPase class C family. It depends on Mn(2+) as a cofactor.

The protein resides in the cytoplasm. The catalysed reaction is diphosphate + H2O = 2 phosphate + H(+). The chain is Probable manganese-dependent inorganic pyrophosphatase from Streptococcus pyogenes serotype M49 (strain NZ131).